Reading from the N-terminus, the 425-residue chain is GTPase Obg (425 aa).

The Obg domain maps to 1-158 (MFRDSAKIYV…YSLILEMKMI (158 aa)). The 172-residue stretch at 159–330 (ADVGLVGYPN…LLYAVSETLK (172 aa)) folds into the OBG-type G domain. Residues 165-172 (GYPNVGKS), 190-194 (FTTLV), 212-215 (DIPG), 282-285 (NKMD), and 311-313 (SAA) contribute to the GTP site. Mg(2+) contacts are provided by S172 and T192. One can recognise an OCT domain in the interval 348–425 (YKVQEEKPFE…IYDTEFDYTR (78 aa)).

It belongs to the TRAFAC class OBG-HflX-like GTPase superfamily. OBG GTPase family. In terms of assembly, monomer. The cofactor is Mg(2+).

It localises to the cytoplasm. In terms of biological role, an essential GTPase which binds GTP, GDP and possibly (p)ppGpp with moderate affinity, with high nucleotide exchange rates and a fairly low GTP hydrolysis rate. Plays a role in control of the cell cycle, stress response, ribosome biogenesis and in those bacteria that undergo differentiation, in morphogenesis control. This is GTPase Obg from Ruminiclostridium cellulolyticum (strain ATCC 35319 / DSM 5812 / JCM 6584 / H10) (Clostridium cellulolyticum).